The following is a 191-amino-acid chain: Calcium-binding protein L (191 aa).

A lipid anchor (N-myristoyl glycine) is attached at Gly2. 3 consecutive EF-hand domains span residues 25–59 (EQVS…RFKD), 60–95 (YDDA…ITKS), and 96–131 (PVSD…ALNT). The Ca(2+) site is built by Asp73, Asp75, Asn77, Arg79, and Glu84.

It belongs to the recoverin family.

In Dictyostelium discoideum (Social amoeba), this protein is Calcium-binding protein L (cbpL).